Here is a 483-residue protein sequence, read N- to C-terminus: Aspartyl/glutamyl-tRNA(Asn/Gln) amidotransferase subunit B (483 aa).

Belongs to the GatB/GatE family. GatB subfamily. Heterotrimer of A, B and C subunits.

The catalysed reaction is L-glutamyl-tRNA(Gln) + L-glutamine + ATP + H2O = L-glutaminyl-tRNA(Gln) + L-glutamate + ADP + phosphate + H(+). It carries out the reaction L-aspartyl-tRNA(Asn) + L-glutamine + ATP + H2O = L-asparaginyl-tRNA(Asn) + L-glutamate + ADP + phosphate + 2 H(+). In terms of biological role, allows the formation of correctly charged Asn-tRNA(Asn) or Gln-tRNA(Gln) through the transamidation of misacylated Asp-tRNA(Asn) or Glu-tRNA(Gln) in organisms which lack either or both of asparaginyl-tRNA or glutaminyl-tRNA synthetases. The reaction takes place in the presence of glutamine and ATP through an activated phospho-Asp-tRNA(Asn) or phospho-Glu-tRNA(Gln). The sequence is that of Aspartyl/glutamyl-tRNA(Asn/Gln) amidotransferase subunit B from Rickettsia africae (strain ESF-5).